The following is a 225-amino-acid chain: ATP-dependent dethiobiotin synthetase BioD (225 aa).

An ATP-binding site is contributed by 12 to 17 (GVGKTV). Thr-16 is a binding site for Mg(2+). Residue Lys-37 is part of the active site. Substrate is bound at residue Thr-41. ATP contacts are provided by residues Asp-49, 108–111 (EGAG), and 197–199 (PAG). The Mg(2+) site is built by Asp-49 and Glu-108.

It belongs to the dethiobiotin synthetase family. In terms of assembly, homodimer. The cofactor is Mg(2+).

It is found in the cytoplasm. It carries out the reaction (7R,8S)-7,8-diammoniononanoate + CO2 + ATP = (4R,5S)-dethiobiotin + ADP + phosphate + 3 H(+). Its pathway is cofactor biosynthesis; biotin biosynthesis; biotin from 7,8-diaminononanoate: step 1/2. Catalyzes a mechanistically unusual reaction, the ATP-dependent insertion of CO2 between the N7 and N8 nitrogen atoms of 7,8-diaminopelargonic acid (DAPA, also called 7,8-diammoniononanoate) to form a ureido ring. The polypeptide is ATP-dependent dethiobiotin synthetase BioD (Mycolicibacterium smegmatis (strain ATCC 700084 / mc(2)155) (Mycobacterium smegmatis)).